The primary structure comprises 392 residues: Na(+)/H(+) antiporter NhaA 2 (392 aa).

The next 11 helical transmembrane spans lie at 20–40 (FFAA…AALI), 63–83 (VEHW…GLEI), 99–119 (ALPG…YVAF), 127–147 (IGGW…VLSL), 158–178 (IFLS…IALF), 181–201 (SDLS…LVAL), 209–229 (LLPY…SGIH), 265–285 (VAFA…LSGI), 298–318 (VALG…ALAI), 336–356 (GVAA…ALAF), and 365–385 (EVKV…VVVL).

The protein belongs to the NhaA Na(+)/H(+) (TC 2.A.33) antiporter family.

The protein localises to the cell inner membrane. It carries out the reaction Na(+)(in) + 2 H(+)(out) = Na(+)(out) + 2 H(+)(in). In terms of biological role, na(+)/H(+) antiporter that extrudes sodium in exchange for external protons. The polypeptide is Na(+)/H(+) antiporter NhaA 2 (Pseudomonas savastanoi pv. phaseolicola (strain 1448A / Race 6) (Pseudomonas syringae pv. phaseolicola (strain 1448A / Race 6))).